The sequence spans 203 residues: Inosine triphosphate pyrophosphatase (203 aa).

13–18 serves as a coordination point for ITP; the sequence is TGNAKK. Residue E43 coordinates Mg(2+). ITP contacts are provided by residues K55, 71 to 72, K88, 147 to 150, K170, and 175 to 176; these read DT, FGWD, and HR.

It belongs to the HAM1 NTPase family. In terms of assembly, homodimer. Mg(2+) is required as a cofactor. It depends on Mn(2+) as a cofactor.

It is found in the cytoplasm. It catalyses the reaction ITP + H2O = IMP + diphosphate + H(+). The catalysed reaction is dITP + H2O = dIMP + diphosphate + H(+). It carries out the reaction XTP + H2O = XMP + diphosphate + H(+). The enzyme catalyses N(6)-hydroxy-dATP + H2O = N(6)-hydroxy-dAMP + diphosphate + H(+). Pyrophosphatase that hydrolyzes the non-canonical purine nucleotides inosine triphosphate (ITP), deoxyinosine triphosphate (dITP) as well as 2'-deoxy-N-6-hydroxylaminopurine triphosphate (dHAPTP) and xanthosine 5'-triphosphate (XTP) to their respective monophosphate derivatives. The enzyme does not distinguish between the deoxy- and ribose forms. Probably excludes non-canonical purines from RNA and DNA precursor pools, thus preventing their incorporation into RNA and DNA and avoiding chromosomal lesions. In Danio rerio (Zebrafish), this protein is Inosine triphosphate pyrophosphatase (itpa).